The following is a 577-amino-acid chain: Urease subunit alpha (577 aa).

The 442-residue stretch at Gly136–Phe577 folds into the Urease domain. His141, His143, and Lys224 together coordinate Ni(2+). Lys224 is subject to N6-carboxylysine. His226 provides a ligand contact to substrate. Residues His253 and His279 each coordinate Ni(2+). The active-site Proton donor is the His327. Residue Asp367 coordinates Ni(2+).

This sequence belongs to the metallo-dependent hydrolases superfamily. Urease alpha subunit family. As to quaternary structure, heterotrimer of UreA (gamma), UreB (beta) and UreC (alpha) subunits. Three heterotrimers associate to form the active enzyme. Ni cation is required as a cofactor. In terms of processing, carboxylation allows a single lysine to coordinate two nickel ions.

Its subcellular location is the cytoplasm. The catalysed reaction is urea + 2 H2O + H(+) = hydrogencarbonate + 2 NH4(+). It functions in the pathway nitrogen metabolism; urea degradation; CO(2) and NH(3) from urea (urease route): step 1/1. The protein is Urease subunit alpha of Mycobacterium marinum (strain ATCC BAA-535 / M).